A 121-amino-acid chain; its full sequence is Homeobox protein HD-6 (121 aa).

The segment at residues P28–Y87 is a DNA-binding region (homeobox).

It is found in the nucleus. The chain is Homeobox protein HD-6 (HD-6) from Encephalitozoon cuniculi (strain GB-M1) (Microsporidian parasite).